Here is a 153-residue protein sequence, read N- to C-terminus: Transcription antitermination protein NusB (153 aa).

This sequence belongs to the NusB family.

Its function is as follows. Involved in transcription antitermination. Required for transcription of ribosomal RNA (rRNA) genes. Binds specifically to the boxA antiterminator sequence of the ribosomal RNA (rrn) operons. In Nitratidesulfovibrio vulgaris (strain ATCC 29579 / DSM 644 / CCUG 34227 / NCIMB 8303 / VKM B-1760 / Hildenborough) (Desulfovibrio vulgaris), this protein is Transcription antitermination protein NusB.